A 143-amino-acid polypeptide reads, in one-letter code: Sporulation-specific cell division protein SsgB (143 aa).

It belongs to the SsgA family. In terms of assembly, interacts with SsgA. Interacts with FtsZ (via N-terminus).

The protein resides in the cell septum. Its function is as follows. Involved in sporulation-specific cell division. Required for early stages of sporulation. Important in the process of growth cessation prior to sporulation-specific cell division. Recruits cell division protein FtsZ to the future septum sites and tethers the contractile ring structure (Z ring) to the cytoplasmic membrane during sporulation. Stimulates polymerization and filament length of FtsZ in vitro. The sequence is that of Sporulation-specific cell division protein SsgB from Frankia casuarinae (strain DSM 45818 / CECT 9043 / HFP020203 / CcI3).